A 315-amino-acid polypeptide reads, in one-letter code: Ribose-phosphate pyrophosphokinase (315 aa).

Residues Asp-37–Glu-39 and Arg-96–Gln-97 contribute to the ATP site. Residues His-131 and Asp-170 each contribute to the Mg(2+) site. Residue Lys-194 is part of the active site. Residues Arg-196, Asp-220, and Asp-224–Thr-228 contribute to the D-ribose 5-phosphate site.

Belongs to the ribose-phosphate pyrophosphokinase family. Class I subfamily. In terms of assembly, homohexamer. Requires Mg(2+) as cofactor.

It is found in the cytoplasm. The catalysed reaction is D-ribose 5-phosphate + ATP = 5-phospho-alpha-D-ribose 1-diphosphate + AMP + H(+). Its pathway is metabolic intermediate biosynthesis; 5-phospho-alpha-D-ribose 1-diphosphate biosynthesis; 5-phospho-alpha-D-ribose 1-diphosphate from D-ribose 5-phosphate (route I): step 1/1. In terms of biological role, involved in the biosynthesis of the central metabolite phospho-alpha-D-ribosyl-1-pyrophosphate (PRPP) via the transfer of pyrophosphoryl group from ATP to 1-hydroxyl of ribose-5-phosphate (Rib-5-P). The protein is Ribose-phosphate pyrophosphokinase of Buchnera aphidicola subsp. Acyrthosiphon pisum (strain APS) (Acyrthosiphon pisum symbiotic bacterium).